We begin with the raw amino-acid sequence, 1005 residues long: Regulator of telomere elongation helicase 1 homolog (1005 aa).

One can recognise a Helicase ATP-binding domain in the interval 7 to 322; sequence AGIPVHFPFE…KEMLLELEKA (316 aa). 42 to 49 is an ATP binding site; it reads SPTGTGKT. [4Fe-4S] cluster-binding residues include Cys145, Cys163, Cys172, and Cys208. The short motif at 251–254 is the DEAH box element; it reads DEAH. Thr876 carries the post-translational modification Phosphothreonine. The segment at 893 to 917 is disordered; the sequence is NGPLKTEPSEPATTSSSFCPTPAQS.

It belongs to the helicase family. RAD3/XPD subfamily.

It localises to the nucleus. It catalyses the reaction ATP + H2O = ADP + phosphate + H(+). In terms of biological role, a probable ATP-dependent DNA helicase implicated in DNA repair and the maintenance of genomic stability. Acts as an anti-recombinase to counteract toxic recombination and limit crossover during meiosis. Regulates meiotic recombination and crossover homeostasis by physically dissociating strand invasion events and thereby promotes noncrossover repair by meiotic synthesis dependent strand annealing (SDSA) as well as disassembly of D loop recombination intermediates. This chain is Regulator of telomere elongation helicase 1 homolog, found in Drosophila virilis (Fruit fly).